A 755-amino-acid chain; its full sequence is Leucine-rich repeat-containing protein 36 (755 aa).

LRR repeat units follow at residues 51–72 and 73–94; these read SLRS…QYLC and SLQE…SRLQ. The region spanning 107–146 is the LRRCT domain; it reads NPVVRKDTDYRLFAVYTLQTLEKLDDRAVRDSERRAAKLH. Disordered stretches follow at residues 354–374 and 448–517; these read GKNY…TTSH and LPPG…PPIS. The segment covering 356 to 370 has biased composition (basic and acidic residues); sequence NYREHSIKPSQDKKA. Low complexity predominate over residues 498 to 510; sequence LSSDLGSLHGLSG. The stretch at 601–671 forms a coiled coil; sequence VESLKQKLVK…ELTQLKRLEE (71 aa). Positions 701-755 are disordered; sequence YSGKSLLPPEKSHPLGRSSPFGKSTLSSSSPMVHDTGQYLIQSVSEADPEPSLWS. Residues 721 to 731 show a composition bias toward polar residues; the sequence is FGKSTLSSSSP.

This is Leucine-rich repeat-containing protein 36 (Lrrc36) from Mus musculus (Mouse).